Reading from the N-terminus, the 211-residue chain is Redox-sensing transcriptional repressor Rex (211 aa).

A DNA-binding region (H-T-H motif) is located at residues 18-57 (LYYRFLKNLHASGKQRVSSAELSEAVKVDSATIRRDFSYF). 92-97 (GVGNLG) contributes to the NAD(+) binding site.

This sequence belongs to the transcriptional regulatory Rex family. In terms of assembly, homodimer.

Its subcellular location is the cytoplasm. Functionally, modulates transcription in response to changes in cellular NADH/NAD(+) redox state. The protein is Redox-sensing transcriptional repressor Rex of Anoxybacillus flavithermus (strain DSM 21510 / WK1).